A 330-amino-acid polypeptide reads, in one-letter code: Endo-1,4-beta-xylanase (330 aa).

Residues 2–330 (CSSIPSLREV…KPAFWRVVNI (329 aa)) enclose the GH10 domain. E133 (proton donor) is an active-site residue. E240 (nucleophile) is an active-site residue.

It belongs to the glycosyl hydrolase 10 (cellulase F) family. Cytoplasmic xylanase subfamily.

Its subcellular location is the cytoplasm. The catalysed reaction is Endohydrolysis of (1-&gt;4)-beta-D-xylosidic linkages in xylans.. The protein operates within glycan degradation; xylan degradation. In Geobacillus stearothermophilus (Bacillus stearothermophilus), this protein is Endo-1,4-beta-xylanase (xynA).